Reading from the N-terminus, the 278-residue chain is Large ribosomal subunit protein uL2 (278 aa).

2 stretches are compositionally biased toward basic residues: residues 210 to 220 and 257 to 278; these read GRMRWKGKRPS and TRRKHKPSDKLIVRRRKSNKKR. Residues 210 to 278 form a disordered region; sequence GRMRWKGKRP…VRRRKSNKKR (69 aa).

Belongs to the universal ribosomal protein uL2 family. Part of the 50S ribosomal subunit. Forms a bridge to the 30S subunit in the 70S ribosome.

In terms of biological role, one of the primary rRNA binding proteins. Required for association of the 30S and 50S subunits to form the 70S ribosome, for tRNA binding and peptide bond formation. It has been suggested to have peptidyltransferase activity; this is somewhat controversial. Makes several contacts with the 16S rRNA in the 70S ribosome. The chain is Large ribosomal subunit protein uL2 from Acidothermus cellulolyticus (strain ATCC 43068 / DSM 8971 / 11B).